Here is a 357-residue protein sequence, read N- to C-terminus: UDP-N-acetylglucosamine--N-acetylmuramyl-(pentapeptide) pyrophosphoryl-undecaprenol N-acetylglucosamine transferase (357 aa).

UDP-N-acetyl-alpha-D-glucosamine-binding positions include 14–16, Asn125, Ser190, and Gln290; that span reads SGG.

This sequence belongs to the glycosyltransferase 28 family. MurG subfamily.

Its subcellular location is the cell inner membrane. The catalysed reaction is di-trans,octa-cis-undecaprenyl diphospho-N-acetyl-alpha-D-muramoyl-L-alanyl-D-glutamyl-meso-2,6-diaminopimeloyl-D-alanyl-D-alanine + UDP-N-acetyl-alpha-D-glucosamine = di-trans,octa-cis-undecaprenyl diphospho-[N-acetyl-alpha-D-glucosaminyl-(1-&gt;4)]-N-acetyl-alpha-D-muramoyl-L-alanyl-D-glutamyl-meso-2,6-diaminopimeloyl-D-alanyl-D-alanine + UDP + H(+). The protein operates within cell wall biogenesis; peptidoglycan biosynthesis. Cell wall formation. Catalyzes the transfer of a GlcNAc subunit on undecaprenyl-pyrophosphoryl-MurNAc-pentapeptide (lipid intermediate I) to form undecaprenyl-pyrophosphoryl-MurNAc-(pentapeptide)GlcNAc (lipid intermediate II). This Chlamydia felis (strain Fe/C-56) (Chlamydophila felis) protein is UDP-N-acetylglucosamine--N-acetylmuramyl-(pentapeptide) pyrophosphoryl-undecaprenol N-acetylglucosamine transferase.